The sequence spans 385 residues: Probable caffeine synthase 3 (385 aa).

Positions 18, 62, 67, 101, 102, 140, and 141 each coordinate S-adenosyl-L-homocysteine. Caffeine is bound by residues tyrosine 158, glutamine 161, and phenylalanine 162. Mg(2+) is bound at residue asparagine 179. Threonine 238 provides a ligand contact to caffeine. Residues aspartate 261, phenylalanine 263, and asparagine 264 each coordinate Mg(2+). A caffeine-binding site is contributed by tyrosine 369.

It belongs to the methyltransferase superfamily. Type-7 methyltransferase family. It depends on Mg(2+) as a cofactor. As to expression, expressed in roots, stems, young and old leaves.

The protein operates within alkaloid biosynthesis. May be involved in the biosynthesis of caffeine. This is Probable caffeine synthase 3 from Coffea arabica (Arabian coffee).